The primary structure comprises 464 residues: Argininosuccinate lyase (464 aa).

It belongs to the lyase 1 family. Argininosuccinate lyase subfamily.

It is found in the cytoplasm. The enzyme catalyses 2-(N(omega)-L-arginino)succinate = fumarate + L-arginine. It participates in amino-acid biosynthesis; L-arginine biosynthesis; L-arginine from L-ornithine and carbamoyl phosphate: step 3/3. The protein is Argininosuccinate lyase of Alcanivorax borkumensis (strain ATCC 700651 / DSM 11573 / NCIMB 13689 / SK2).